We begin with the raw amino-acid sequence, 258 residues long: 3-deoxy-manno-octulosonate cytidylyltransferase (258 aa).

This sequence belongs to the KdsB family.

It localises to the cytoplasm. It catalyses the reaction 3-deoxy-alpha-D-manno-oct-2-ulosonate + CTP = CMP-3-deoxy-beta-D-manno-octulosonate + diphosphate. Its pathway is nucleotide-sugar biosynthesis; CMP-3-deoxy-D-manno-octulosonate biosynthesis; CMP-3-deoxy-D-manno-octulosonate from 3-deoxy-D-manno-octulosonate and CTP: step 1/1. It participates in bacterial outer membrane biogenesis; lipopolysaccharide biosynthesis. In terms of biological role, activates KDO (a required 8-carbon sugar) for incorporation into bacterial lipopolysaccharide in Gram-negative bacteria. This Parvibaculum lavamentivorans (strain DS-1 / DSM 13023 / NCIMB 13966) protein is 3-deoxy-manno-octulosonate cytidylyltransferase.